The sequence spans 379 residues: MECREITEGSTTFTAPVQDETTQFPPGSAPVFYNTKMEFNRDMTVLLTKIVQPEDYLDAMAATGVRGLRIANEAKIPVTINDRDEQAVKIIKYNAEKLGGDISVTCDDANRLMCTSRFDSIDLDPFGTPVPFLDAASRAAKHYLFVTATDTAPLCGAHFKAGCRRYFATPRNTEYHAEVGLRMMMGTMARELVKYDRGMKPILSYAKSHYFRSHVRVLGKVTAADETLAQIGFVMQCPKCLYREEQKGSLYPKMHICPHCGVETVPVGPLWMGPLQEKEILAEMQTALAELQFGTKRQMEKMLTFLLAEPETCTYYDYHIISRNMKVSPPNMEELIASLNEAGYYTTRTHFCDTGIKTTAPLPLIEEKIRLWNAKNLQM.

A disordered region spans residues methionine 1–proline 26. A Trm1 methyltransferase domain is found at arginine 4 to isoleucine 369. Positions glutamate 8–proline 25 are enriched in polar residues. Arginine 41, arginine 66, aspartate 82, aspartate 108, and alanine 109 together coordinate S-adenosyl-L-methionine. Positions 237, 240, 257, and 260 each coordinate Zn(2+).

The protein belongs to the class I-like SAM-binding methyltransferase superfamily. Trm1 family.

It carries out the reaction guanosine(26) in tRNA + 2 S-adenosyl-L-methionine = N(2)-dimethylguanosine(26) in tRNA + 2 S-adenosyl-L-homocysteine + 2 H(+). Functionally, dimethylates a single guanine residue at position 26 of a number of tRNAs using S-adenosyl-L-methionine as donor of the methyl groups. This is tRNA (guanine(26)-N(2))-dimethyltransferase from Methanocorpusculum labreanum (strain ATCC 43576 / DSM 4855 / Z).